A 339-amino-acid polypeptide reads, in one-letter code: Probable cytosolic iron-sulfur protein assembly protein CIAO1 (339 aa).

WD repeat units lie at residues 14–53 (HPDS…WICK), 59–98 (GHQR…FECV), 103–142 (GHEN…EYEC), 148–187 (SHTQ…WVCC), 192–231 (GHES…NEQG), 250–289 (FHSR…DPQQ), and 301–339 (AHSQ…SEGI). Residues 176 to 178 (LYR) carry the LYR motif; required for interaction with HSC20 motif.

The protein belongs to the WD repeat CIA1 family. Component of the CIA complex. Interacts with CIAO2A and forms a complex with CIAO2B and MMS19; the interactions with CIAO2A and CIAO2B are mutually exclusive. Interacts with CHD1L, ERCC2, IREB2 and POLD1. Component of the MMXD complex, which includes CIAO1, ERCC2, CIAO2B, MMS19 and SLC25A5. Interacts with WT1. Interacts with CIAO3. Interacts (via LYR motif) with HSC20.

The protein localises to the cytoplasm. Functionally, key component of the cytosolic iron-sulfur protein assembly (CIA) complex, a multiprotein complex that mediates the incorporation of iron-sulfur cluster into extramitochondrial Fe/S proteins. As a CIA complex component, interacts specifically with CIAO2A or CIAO2B and MMS19 to assist different branches of iron-sulfur protein assembly, depending of its interactors. The complex CIAO1:CIAO2B:MMS19 binds to and facilitates the assembly of most cytosolic-nuclear Fe/S proteins. CIAO1:CIAO2A specifically matures ACO1 and stabilizes IREB2. Seems to specifically modulate the transactivation activity of WT1. As part of the mitotic spindle-associated MMXD complex it may play a role in chromosome segregation. This chain is Probable cytosolic iron-sulfur protein assembly protein CIAO1, found in Bos taurus (Bovine).